The following is a 194-amino-acid chain: Large ribosomal subunit protein uL5 (194 aa).

This sequence belongs to the universal ribosomal protein uL5 family. Part of the 50S ribosomal subunit; part of the 5S rRNA/L5/L18/L25 subcomplex. Contacts the 5S rRNA and the P site tRNA. Forms a bridge to the 30S subunit in the 70S ribosome.

This is one of the proteins that bind and probably mediate the attachment of the 5S RNA into the large ribosomal subunit, where it forms part of the central protuberance. In the 70S ribosome it contacts protein S13 of the 30S subunit (bridge B1b), connecting the 2 subunits; this bridge is implicated in subunit movement. Contacts the P site tRNA; the 5S rRNA and some of its associated proteins might help stabilize positioning of ribosome-bound tRNAs. The polypeptide is Large ribosomal subunit protein uL5 (Chlorobium luteolum (strain DSM 273 / BCRC 81028 / 2530) (Pelodictyon luteolum)).